The chain runs to 112 residues: ATP synthase epsilon chain (112 aa).

The protein belongs to the ATPase epsilon chain family. F-type ATPases have 2 components, CF(1) - the catalytic core - and CF(0) - the membrane proton channel. CF(1) has five subunits: alpha(3), beta(3), gamma(1), delta(1), epsilon(1). CF(0) has three main subunits: a, b and c.

It is found in the cell inner membrane. Produces ATP from ADP in the presence of a proton gradient across the membrane. The protein is ATP synthase epsilon chain of Rickettsia felis (strain ATCC VR-1525 / URRWXCal2) (Rickettsia azadi).